The chain runs to 100 residues: MHLSPQEKDKLLIFSAALLAERRLSRGLKLNYPETIAFLSFQVLEGARDGKSVSQLMSEGTTWLSKSQVMEGIPEMVDEVQIEAVFPDGTKLVTIHNPIN.

The protein belongs to the urease gamma subunit family. Heterotrimer of UreA (gamma), UreB (beta) and UreC (alpha) subunits. Three heterotrimers associate to form the active enzyme.

It is found in the cytoplasm. It carries out the reaction urea + 2 H2O + H(+) = hydrogencarbonate + 2 NH4(+). It participates in nitrogen metabolism; urea degradation; CO(2) and NH(3) from urea (urease route): step 1/1. This Prochlorococcus marinus (strain AS9601) protein is Urease subunit gamma.